A 323-amino-acid polypeptide reads, in one-letter code: Small ribosomal subunit protein uS2 (323 aa).

The segment at valine 295 to lysine 323 is disordered.

It belongs to the universal ribosomal protein uS2 family.

In Mycoplasmoides gallisepticum (strain R(low / passage 15 / clone 2)) (Mycoplasma gallisepticum), this protein is Small ribosomal subunit protein uS2.